Reading from the N-terminus, the 374-residue chain is U-box domain-containing protein 8 (374 aa).

The 76-residue stretch at 4 to 79 (DLPNDFRCPI…LNFAHVSLKE (76 aa)) folds into the U-box domain. 5 ARM repeats span residues 126–165 (SSIRRKVTESGAVRAALDCVDSCNQVLQEKSLSLLLNLSL), 167–206 (DDNKVGLVADGVIRRIVTVLRVGSPDCKAIAATLLTSLAV), 208–248 (EVNK…ALCS), 250–288 (PDNRKRVVDCGSVPILVEAADSGLERAVEVLGLLVKCRG), and 289–327 (GREEMSKVSGFVEVLVNVLRNGNLKGIQYSLFILNCLCC).

As to expression, expressed in the whole plant.

It catalyses the reaction S-ubiquitinyl-[E2 ubiquitin-conjugating enzyme]-L-cysteine + [acceptor protein]-L-lysine = [E2 ubiquitin-conjugating enzyme]-L-cysteine + N(6)-ubiquitinyl-[acceptor protein]-L-lysine.. The protein operates within protein modification; protein ubiquitination. Its function is as follows. Functions as an E3 ubiquitin ligase. Involved in the age-dependent pseudo-self-compatibility process. The polypeptide is U-box domain-containing protein 8 (PUB8) (Arabidopsis thaliana (Mouse-ear cress)).